Here is a 532-residue protein sequence, read N- to C-terminus: Chondroitin sulfate N-acetylgalactosaminyltransferase 1 (532 aa).

The Cytoplasmic segment spans residues 1 to 14 (MMMVRRGLLAWISR). The helical; Signal-anchor for type II membrane protein transmembrane segment at 15 to 35 (VVVLLVLLCCAISVLYMLACT) threads the bilayer. Over 36-532 (PKGDEEQLAL…QKQKTSSKKT (497 aa)) the chain is Lumenal. The stretch at 57–100 (YQAVLQEWEEQHRNYVSSLKRQIAQLKEELQERSEQLRNGQYQA) forms a coiled coil. Residues N315 and N324 are each glycosylated (N-linked (GlcNAc...) asparagine). Residues D360 and H477 each coordinate a divalent metal cation.

Belongs to the chondroitin N-acetylgalactosaminyltransferase family. Post-translationally, N-glycosylated. In terms of tissue distribution, ubiquitous, with the highest levels in placenta, thyroid, bladder, prostate and adrenal gland. Detected at low levels in the other tissues examined.

The protein resides in the golgi apparatus. The protein localises to the golgi stack membrane. It carries out the reaction 3-O-(beta-D-GlcA-(1-&gt;3)-beta-D-Gal-(1-&gt;3)-beta-D-Gal-(1-&gt;4)-beta-D-Xyl)-L-seryl-[protein] + UDP-N-acetyl-alpha-D-galactosamine = 3-O-(beta-D-GalNAc-(1-&gt;4)-beta-D-GlcA-(1-&gt;3)-beta-D-Gal-(1-&gt;3)-beta-D-Gal-(1-&gt;4)-beta-D-Xyl)-L-seryl-[protein] + UDP + H(+). Its function is as follows. Transfers 1,4-N-acetylgalactosamine (GalNAc) from UDP-GalNAc to the non-reducing end of glucuronic acid (GlcUA). Required for addition of the first GalNAc to the core tetrasaccharide linker and for elongation of chondroitin chains. Important role in chondroitin chain biosynthesis in cartilage formation and subsequent endochondral ossification. Moreover, is involved in the metabolism of aggrecan. The polypeptide is Chondroitin sulfate N-acetylgalactosaminyltransferase 1 (Homo sapiens (Human)).